The chain runs to 373 residues: Geraniol dehydrogenase (373 aa).

The Zn(2+) site is built by C47, H67, C96, C99, C102, C110, and C175.

The protein belongs to the zinc-containing alcohol dehydrogenase family. As to quaternary structure, homodimer. Zn(2+) is required as a cofactor.

It carries out the reaction (2E)-geraniol + NAD(+) = (2E)-geranial + NADH + H(+). The catalysed reaction is perillyl alcohol + NAD(+) = perillyl aldehyde + NADH + H(+). It participates in terpene metabolism; monoterpene degradation. Is inhibited by EDTA, N-ethylmaleimide, diethylpyrocarbonate, and 1-cyclohexyl-N-(2-morpholinoethyl)carbodiimide in vitro. Functionally, involved in the degradation of the monoterpenes beta-myrcene and limonene. During anaerobic degradation of beta-myrcene, catalyzes the NAD(+)-dependent oxidation of geraniol to geranial. Can also catalyze the oxidation of (S)-perillyl alcohol to perillyl aldehyde, and to a lesser extent, the oxidation of nerol, citronellol, cumic alcohol, and benzyl alcohol. Cannot use NADP(+) instead of NAD(+) as cosubstrate. The polypeptide is Geraniol dehydrogenase (Castellaniella defragrans (strain DSM 12143 / CCUG 39792 / 65Phen) (Alcaligenes defragrans)).